A 501-amino-acid polypeptide reads, in one-letter code: Mitogen-activated protein kinase 16 (501 aa).

The region spanning 22–313 is the Protein kinase domain; it reads YEVTEVVGKG…AAEALTDPYF (292 aa). ATP-binding positions include 28–36 and K51; that span reads VGKGSYGVV. The Proton acceptor role is filled by D148. T184 is modified (phosphothreonine). A TXY motif is present at residues 184-186; the sequence is TDY. A Phosphotyrosine modification is found at Y186. Positions 477 to 501 are disordered; it reads DEESMSEYMNEAADGVPHKIAQLKT.

It belongs to the protein kinase superfamily. CMGC Ser/Thr protein kinase family. MAP kinase subfamily. In terms of processing, dually phosphorylated on Thr-184 and Tyr-186, which activates the enzyme.

The enzyme catalyses L-seryl-[protein] + ATP = O-phospho-L-seryl-[protein] + ADP + H(+). It carries out the reaction L-threonyl-[protein] + ATP = O-phospho-L-threonyl-[protein] + ADP + H(+). Activated by threonine and tyrosine phosphorylation. This is Mitogen-activated protein kinase 16 (MPK16) from Oryza sativa subsp. japonica (Rice).